A 1537-amino-acid polypeptide reads, in one-letter code: DNA-directed RNA polymerase subunit beta' (1537 aa).

Residues Cys57, Cys59, Cys72, and Cys75 each contribute to the Zn(2+) site. Mg(2+) contacts are provided by Asp746, Asp748, and Asp750. The Zn(2+) site is built by Cys1120, Cys1201, Cys1208, and Cys1211. The disordered stretch occupies residues 1502–1537 (LEKYGQTSVSTDAVTGSQRYDDTRPSSTSINPSYGD). 2 stretches are compositionally biased toward polar residues: residues 1506-1519 (GQTS…TGSQ) and 1526-1537 (PSSTSINPSYGD).

It belongs to the RNA polymerase beta' chain family. The RNAP catalytic core consists of 2 alpha, 1 beta, 1 beta' and 1 omega subunit. When a sigma factor is associated with the core the holoenzyme is formed, which can initiate transcription. It depends on Mg(2+) as a cofactor. Requires Zn(2+) as cofactor.

It catalyses the reaction RNA(n) + a ribonucleoside 5'-triphosphate = RNA(n+1) + diphosphate. DNA-dependent RNA polymerase catalyzes the transcription of DNA into RNA using the four ribonucleoside triphosphates as substrates. This Deinococcus geothermalis (strain DSM 11300 / CIP 105573 / AG-3a) protein is DNA-directed RNA polymerase subunit beta'.